Consider the following 189-residue polypeptide: Probable nicotinate-nucleotide adenylyltransferase (189 aa).

It belongs to the NadD family.

It catalyses the reaction nicotinate beta-D-ribonucleotide + ATP + H(+) = deamido-NAD(+) + diphosphate. Its pathway is cofactor biosynthesis; NAD(+) biosynthesis; deamido-NAD(+) from nicotinate D-ribonucleotide: step 1/1. Functionally, catalyzes the reversible adenylation of nicotinate mononucleotide (NaMN) to nicotinic acid adenine dinucleotide (NaAD). The chain is Probable nicotinate-nucleotide adenylyltransferase from Caulobacter sp. (strain K31).